A 248-amino-acid chain; its full sequence is Protein maestro (248 aa).

A disordered region spans residues 1–20; the sequence is MDQRQRRILGQPLSIPTSQP. 2 HEAT repeats span residues 44 to 79 and 128 to 163; these read EPLK…AREA and SFFI…AAFA.

It localises to the nucleus. Its subcellular location is the nucleolus. This Macaca fascicularis (Crab-eating macaque) protein is Protein maestro (MRO).